Reading from the N-terminus, the 550-residue chain is Undecaprenyl phosphate-alpha-4-amino-4-deoxy-L-arabinose arabinosyl transferase 2 (550 aa).

11 consecutive transmembrane segments (helical) span residues Leu4 to Phe24, Phe81 to Leu101, Trp110 to Ala132, Phe176 to Ile196, Val204 to Ile224, Ala255 to Leu275, Thr288 to Leu308, Leu313 to Ala333, Leu348 to Ala368, Val381 to Ala401, and Ala409 to Ile429.

Belongs to the glycosyltransferase 83 family.

The protein resides in the cell inner membrane. It carries out the reaction 4-amino-4-deoxy-alpha-L-arabinopyranosyl di-trans,octa-cis-undecaprenyl phosphate + lipid IVA = lipid IIA + di-trans,octa-cis-undecaprenyl phosphate.. It functions in the pathway lipopolysaccharide metabolism; 4-amino-4-deoxy-beta-L-arabinose-lipid A biosynthesis. Catalyzes the transfer of the L-Ara4N moiety of the glycolipid undecaprenyl phosphate-alpha-L-Ara4N to lipid A. The modified arabinose is attached to lipid A and is required for resistance to polymyxin and cationic antimicrobial peptides. This Sodalis glossinidius (strain morsitans) protein is Undecaprenyl phosphate-alpha-4-amino-4-deoxy-L-arabinose arabinosyl transferase 2.